Consider the following 80-residue polypeptide: Putative membrane protein insertion efficiency factor (80 aa).

The tract at residues 60 to 80 (SKTGKDPVPDRFSLKRNQEGE) is disordered. The span at 62-80 (TGKDPVPDRFSLKRNQEGE) shows a compositional bias: basic and acidic residues.

The protein belongs to the UPF0161 family.

The protein resides in the cell membrane. Functionally, could be involved in insertion of integral membrane proteins into the membrane. This is Putative membrane protein insertion efficiency factor from Streptococcus pneumoniae serotype 4 (strain ATCC BAA-334 / TIGR4).